A 370-amino-acid chain; its full sequence is Prolactin-releasing peptide receptor (370 aa).

Topologically, residues 1-62 (MASSTTRGPR…LQLVHQLKGL (62 aa)) are extracellular. N-linked (GlcNAc...) asparagine glycosylation is found at Asn-27 and Asn-36. The chain crosses the membrane as a helical span at residues 63-83 (IVLLYSVVVVVGLVGNCLLVL). The Cytoplasmic portion of the chain corresponds to 84-101 (VIARVRRLHNVTNFLIGN). A helical transmembrane segment spans residues 102-122 (LALSDVLMCTACVPLTLAYAF). Topologically, residues 123-126 (EPRG) are extracellular. Residues 127 to 147 (WVFGGGLCHLVFFLQPVTVYV) form a helical membrane-spanning segment. An intrachain disulfide couples Cys-134 to Cys-211. The Cytoplasmic portion of the chain corresponds to 148–175 (SVFTLTTIAVDRYVVLVHPLRRRISLRL). A helical transmembrane segment spans residues 176–196 (SAYAVLAIWALSAVLALPAAV). The Extracellular segment spans residues 197 to 225 (HTYHVELKPHDVRLCEEFWGSQERQRQLY). A helical membrane pass occupies residues 226–246 (AWGLLLVTYLLPLLVILLSYV). The Cytoplasmic portion of the chain corresponds to 247–276 (RVSVKLRNRVVPGCVTQSQADWDRARRRRT). Residues 277–297 (FCLLVVIVVVFAVCWLPLHVF) traverse the membrane as a helical segment. Topologically, residues 298-317 (NLLRDLDPHAIDPYAFGLVQ) are extracellular. The helical transmembrane segment at 318–338 (LLCHWLAMSSACYNPFIYAWL) threads the bilayer. The Cytoplasmic portion of the chain corresponds to 339–369 (HDSFREELRKLLVAWPRKIAPHGQNMTVSVV). The required for interaction with GRIP1, GRIP2 and PICK1 stretch occupies residues 365 to 370 (TVSVVI).

This sequence belongs to the G-protein coupled receptor 1 family. Interacts through its C-terminal region with the PDZ domain-containing proteins GRIP1, GRIP2 and PICK1. Interacts with PDZ domains 4 and 5 of GRIP1 and with the PDZ domain of PICK1. In terms of tissue distribution, only detected in the pituitary gland and in all cell types of pituitary adenomas.

It is found in the cell membrane. Receptor for prolactin-releasing peptide (PrRP). Implicated in lactation, regulation of food intake and pain-signal processing. This is Prolactin-releasing peptide receptor (PRLHR) from Homo sapiens (Human).